The chain runs to 135 residues: Large ribosomal subunit protein uL18 (135 aa).

The disordered stretch occupies residues 1–25 (MAQTENQKSKRIPLGKDVSTQRRLS).

Belongs to the universal ribosomal protein uL18 family. As to quaternary structure, part of the 50S ribosomal subunit; part of the 5S rRNA/L5/L18/L25 subcomplex. Contacts the 5S and 23S rRNAs.

Functionally, this is one of the proteins that bind and probably mediate the attachment of the 5S RNA into the large ribosomal subunit, where it forms part of the central protuberance. The sequence is that of Large ribosomal subunit protein uL18 from Nocardia farcinica (strain IFM 10152).